The primary structure comprises 270 residues: uncharacterized protein (270 aa).

It belongs to the GSP E family.

This is an uncharacterized protein from Methanocaldococcus jannaschii (strain ATCC 43067 / DSM 2661 / JAL-1 / JCM 10045 / NBRC 100440) (Methanococcus jannaschii).